A 422-amino-acid chain; its full sequence is 26S proteasome non-ATPase regulatory subunit 11 (422 aa).

Residue alanine 2 is modified to N-acetylalanine. A phosphoserine mark is found at serine 14 and serine 23. The region spanning 224 to 392 is the PCI domain; it reads DWKTAYSYFY…GVLIIFDEPP (169 aa). Residue lysine 274 forms a Glycyl lysine isopeptide (Lys-Gly) (interchain with G-Cter in SUMO2) linkage.

The protein belongs to the proteasome subunit S9 family. Component of the 19S proteasome regulatory particle complex. The 26S proteasome consists of a 20S core particle (CP) and two 19S regulatory subunits (RP). The regulatory particle is made of a lid composed of 9 subunits including PSMD11, a base containing 6 ATPases and few additional components.

Functionally, component of the 26S proteasome, a multiprotein complex involved in the ATP-dependent degradation of ubiquitinated proteins. This complex plays a key role in the maintenance of protein homeostasis by removing misfolded or damaged proteins, which could impair cellular functions, and by removing proteins whose functions are no longer required. Therefore, the proteasome participates in numerous cellular processes, including cell cycle progression, apoptosis, or DNA damage repair. In the complex, PSMD11 is required for proteasome assembly. Plays a key role in increased proteasome activity in embryonic stem cells (ESCs): its high expression in ESCs promotes enhanced assembly of the 26S proteasome, followed by higher proteasome activity. In Mus musculus (Mouse), this protein is 26S proteasome non-ATPase regulatory subunit 11 (Psmd11).